The primary structure comprises 150 residues: Large ribosomal subunit protein bL9 (150 aa).

It belongs to the bacterial ribosomal protein bL9 family.

Binds to the 23S rRNA. In Lactococcus lactis subsp. cremoris (strain MG1363), this protein is Large ribosomal subunit protein bL9.